An 872-amino-acid chain; its full sequence is Leucine--tRNA ligase (872 aa).

The short motif at 42–52 is the 'HIGH' region element; sequence PYPSGSLHMGH. The 'KMSKS' region signature appears at 634 to 638; sequence TMSKS. Position 637 (lysine 637) interacts with ATP.

Belongs to the class-I aminoacyl-tRNA synthetase family.

The protein localises to the cytoplasm. The catalysed reaction is tRNA(Leu) + L-leucine + ATP = L-leucyl-tRNA(Leu) + AMP + diphosphate. This is Leucine--tRNA ligase from Trichormus variabilis (strain ATCC 29413 / PCC 7937) (Anabaena variabilis).